A 232-amino-acid polypeptide reads, in one-letter code: Ribosomal RNA large subunit methyltransferase E (232 aa).

S-adenosyl-L-methionine contacts are provided by glycine 64, tryptophan 66, aspartate 97, aspartate 113, and aspartate 138. Lysine 178 acts as the Proton acceptor in catalysis.

Belongs to the class I-like SAM-binding methyltransferase superfamily. RNA methyltransferase RlmE family.

The protein localises to the cytoplasm. The catalysed reaction is uridine(2552) in 23S rRNA + S-adenosyl-L-methionine = 2'-O-methyluridine(2552) in 23S rRNA + S-adenosyl-L-homocysteine + H(+). Specifically methylates the uridine in position 2552 of 23S rRNA at the 2'-O position of the ribose in the fully assembled 50S ribosomal subunit. The polypeptide is Ribosomal RNA large subunit methyltransferase E (Leptothrix cholodnii (strain ATCC 51168 / LMG 8142 / SP-6) (Leptothrix discophora (strain SP-6))).